The following is a 526-amino-acid chain: Peptide chain release factor 3 (526 aa).

The tr-type G domain maps to 9–277 (DKRRTFAIIS…GIVEWAPKPQ (269 aa)). Residues 18-25 (SHPDAGKT), 86-90 (DTPGH), and 140-143 (NKLD) contribute to the GTP site.

Belongs to the TRAFAC class translation factor GTPase superfamily. Classic translation factor GTPase family. PrfC subfamily.

The protein resides in the cytoplasm. Increases the formation of ribosomal termination complexes and stimulates activities of RF-1 and RF-2. It binds guanine nucleotides and has strong preference for UGA stop codons. It may interact directly with the ribosome. The stimulation of RF-1 and RF-2 is significantly reduced by GTP and GDP, but not by GMP. The polypeptide is Peptide chain release factor 3 (Shewanella sediminis (strain HAW-EB3)).